A 308-amino-acid polypeptide reads, in one-letter code: D-alanine--D-alanine ligase (308 aa).

Residues 102-302 form the ATP-grasp domain; it reads KHVAKAAGIP…FGEFLRWMVE (201 aa). 128–183 contacts ATP; that stretch reads PMKPPYVVKPVREGSSFGVVIVKEDQSHPPQVITSSEWRYGDRVMVERYIAGREFT. Asp-252, Glu-269, and Asn-271 together coordinate Mg(2+).

This sequence belongs to the D-alanine--D-alanine ligase family. It depends on Mg(2+) as a cofactor. Mn(2+) is required as a cofactor.

The protein localises to the cytoplasm. The enzyme catalyses 2 D-alanine + ATP = D-alanyl-D-alanine + ADP + phosphate + H(+). The protein operates within cell wall biogenesis; peptidoglycan biosynthesis. In terms of biological role, cell wall formation. The polypeptide is D-alanine--D-alanine ligase (Rhizobium meliloti (strain 1021) (Ensifer meliloti)).